The chain runs to 336 residues: Holliday junction branch migration complex subunit RuvB (336 aa).

The large ATPase domain (RuvB-L) stretch occupies residues 4–184 (ADRLISATGV…FGIVQRLEFY (181 aa)). ATP contacts are provided by residues Ile23, Arg24, Gly65, Lys68, Thr69, Thr70, 131–133 (EDY), Arg174, Tyr184, and Arg221. Residue Thr69 coordinates Mg(2+). The tract at residues 185–255 (NVKDLTDIVS…IAARAMDMLD (71 aa)) is small ATPAse domain (RuvB-S). Positions 258-336 (NEGFDFMDRK…HFGLQRPDER (79 aa)) are head domain (RuvB-H). Positions 313 and 318 each coordinate DNA.

The protein belongs to the RuvB family. As to quaternary structure, homohexamer. Forms an RuvA(8)-RuvB(12)-Holliday junction (HJ) complex. HJ DNA is sandwiched between 2 RuvA tetramers; dsDNA enters through RuvA and exits via RuvB. An RuvB hexamer assembles on each DNA strand where it exits the tetramer. Each RuvB hexamer is contacted by two RuvA subunits (via domain III) on 2 adjacent RuvB subunits; this complex drives branch migration. In the full resolvosome a probable DNA-RuvA(4)-RuvB(12)-RuvC(2) complex forms which resolves the HJ.

The protein localises to the cytoplasm. The catalysed reaction is ATP + H2O = ADP + phosphate + H(+). Its function is as follows. The RuvA-RuvB-RuvC complex processes Holliday junction (HJ) DNA during genetic recombination and DNA repair, while the RuvA-RuvB complex plays an important role in the rescue of blocked DNA replication forks via replication fork reversal (RFR). RuvA specifically binds to HJ cruciform DNA, conferring on it an open structure. The RuvB hexamer acts as an ATP-dependent pump, pulling dsDNA into and through the RuvAB complex. RuvB forms 2 homohexamers on either side of HJ DNA bound by 1 or 2 RuvA tetramers; 4 subunits per hexamer contact DNA at a time. Coordinated motions by a converter formed by DNA-disengaged RuvB subunits stimulates ATP hydrolysis and nucleotide exchange. Immobilization of the converter enables RuvB to convert the ATP-contained energy into a lever motion, pulling 2 nucleotides of DNA out of the RuvA tetramer per ATP hydrolyzed, thus driving DNA branch migration. The RuvB motors rotate together with the DNA substrate, which together with the progressing nucleotide cycle form the mechanistic basis for DNA recombination by continuous HJ branch migration. Branch migration allows RuvC to scan DNA until it finds its consensus sequence, where it cleaves and resolves cruciform DNA. The chain is Holliday junction branch migration complex subunit RuvB from Aeromonas salmonicida (strain A449).